Reading from the N-terminus, the 333-residue chain is 4-hydroxy-3-methylbut-2-enyl diphosphate reductase (333 aa).

Residue cysteine 20 participates in [4Fe-4S] cluster binding. Residues histidine 49 and histidine 85 each coordinate (2E)-4-hydroxy-3-methylbut-2-enyl diphosphate. Dimethylallyl diphosphate-binding residues include histidine 49 and histidine 85. Isopentenyl diphosphate contacts are provided by histidine 49 and histidine 85. Cysteine 107 contributes to the [4Fe-4S] cluster binding site. Histidine 135 is a binding site for (2E)-4-hydroxy-3-methylbut-2-enyl diphosphate. Histidine 135 is a binding site for dimethylallyl diphosphate. Histidine 135 lines the isopentenyl diphosphate pocket. Catalysis depends on glutamate 137, which acts as the Proton donor. Position 176 (threonine 176) interacts with (2E)-4-hydroxy-3-methylbut-2-enyl diphosphate. [4Fe-4S] cluster is bound at residue cysteine 206. The (2E)-4-hydroxy-3-methylbut-2-enyl diphosphate site is built by serine 234, serine 235, asparagine 236, and serine 279. Dimethylallyl diphosphate is bound by residues serine 234, serine 235, asparagine 236, and serine 279. 4 residues coordinate isopentenyl diphosphate: serine 234, serine 235, asparagine 236, and serine 279.

The protein belongs to the IspH family. [4Fe-4S] cluster is required as a cofactor.

The catalysed reaction is isopentenyl diphosphate + 2 oxidized [2Fe-2S]-[ferredoxin] + H2O = (2E)-4-hydroxy-3-methylbut-2-enyl diphosphate + 2 reduced [2Fe-2S]-[ferredoxin] + 2 H(+). The enzyme catalyses dimethylallyl diphosphate + 2 oxidized [2Fe-2S]-[ferredoxin] + H2O = (2E)-4-hydroxy-3-methylbut-2-enyl diphosphate + 2 reduced [2Fe-2S]-[ferredoxin] + 2 H(+). It functions in the pathway isoprenoid biosynthesis; dimethylallyl diphosphate biosynthesis; dimethylallyl diphosphate from (2E)-4-hydroxy-3-methylbutenyl diphosphate: step 1/1. Its pathway is isoprenoid biosynthesis; isopentenyl diphosphate biosynthesis via DXP pathway; isopentenyl diphosphate from 1-deoxy-D-xylulose 5-phosphate: step 6/6. In terms of biological role, catalyzes the conversion of 1-hydroxy-2-methyl-2-(E)-butenyl 4-diphosphate (HMBPP) into a mixture of isopentenyl diphosphate (IPP) and dimethylallyl diphosphate (DMAPP). Acts in the terminal step of the DOXP/MEP pathway for isoprenoid precursor biosynthesis. The protein is 4-hydroxy-3-methylbut-2-enyl diphosphate reductase of Rhizobium etli (strain CIAT 652).